Consider the following 228-residue polypeptide: Large ribosomal subunit protein bL25 (228 aa).

Residues 1 to 24 (MATVMELKATARPKSGKGAARAER) form a disordered region.

This sequence belongs to the bacterial ribosomal protein bL25 family. CTC subfamily. Part of the 50S ribosomal subunit; part of the 5S rRNA/L5/L18/L25 subcomplex. Contacts the 5S rRNA. Binds to the 5S rRNA independently of L5 and L18.

This is one of the proteins that binds to the 5S RNA in the ribosome where it forms part of the central protuberance. The protein is Large ribosomal subunit protein bL25 of Nitrobacter winogradskyi (strain ATCC 25391 / DSM 10237 / CIP 104748 / NCIMB 11846 / Nb-255).